Consider the following 227-residue polypeptide: A-type potassium channel modulatory protein KCNIP1 (227 aa).

The 57-residue stretch at 38 to 94 (LEMTMVCHRPEGLEQLEAQTNFTKRELQVLYRGFKNECPSGVVNEETFKQIYAQFFP) folds into the EF-hand 1; degenerate domain. EF-hand domains are found at residues 97–132 (DAST…LLRG), 133–168 (TVHE…IYDM), and 181–216 (TPRQ…DDNI). Ca(2+) is bound by residues D146, N148, D150, Y152, E157, D194, N196, D198, and E205. The tract at residues 214-227 (DNIMRSLQLFQNVM) is interaction with KCND2.

It belongs to the recoverin family. Component of heteromultimeric potassium channels. Identified in potassium channel complexes containing KCND1, KCND2, KCND3, KCNIP1, KCNIP2, KCNIP3, KCNIP4, DPP6 and DPP10. Part of a heterooctamer composed of the tetrameric channel and four KCNIP1 chains. Probably part of a complex consisting of KCNIP1, KCNIP2 isoform 3 and KCND2. Self-associates to form homodimers and homotetramers. Interacts with KCNIP2 isoform 3 in a calcium-dependent manner. Interacts with KCND2; this interaction mediates the capture of both the N- and C-terminus of KCND2, thus preventing KCND2 N-type inactivation and modulates the channel gating kinetics. Interacts with KCND3; each KCNIP1 monomer interacts with two adjacent KCND3 subunits, through both the N-terminal inactivation ball of a KCND3 subunit and a C-terminal helix from the adjacent KCND3 subunit, clamping them together; this interaction stabilizes the tetrameric form and modulates the channel gating kinetics namely channel activation and inactivation kinetics and rate of recovery from inactivation. In terms of tissue distribution, expressed in brain. Found in a subpopulation of neurons widely distributed and enriched in Purkinje cells of the cerebellum and in the reticular thalamic and medial habenular nuclei.

The protein localises to the cell membrane. The protein resides in the cytoplasm. It is found in the cell projection. Its subcellular location is the dendrite. Regulatory subunit of Kv4/D (Shal)-type voltage-gated rapidly inactivating A-type potassium channels. Regulates channel density, inactivation kinetics and rate of recovery from inactivation in a calcium-dependent and isoform-specific manner. Modulates KCND2/Kv4.2 currents. In vitro, modulates KCND1/Kv4.1 currents. Increases the presence of KCND2 at the cell surface. The sequence is that of A-type potassium channel modulatory protein KCNIP1 from Mus musculus (Mouse).